The sequence spans 454 residues: Pyrrolysine--tRNA ligase (454 aa).

A disordered region spans residues 102 to 138 (TRTKKAMPKSVARAPKPLENTEAAQAQPSGSKFSPAI). The segment covering 123–133 (EAAQAQPSGSK) has biased composition (polar residues).

The protein belongs to the class-II aminoacyl-tRNA synthetase family.

It localises to the cytoplasm. The enzyme catalyses tRNA(Pyl) + L-pyrrolysine + ATP = L-pyrrolysyl-tRNA(Pyl) + AMP + diphosphate. Catalyzes the attachment of pyrrolysine to tRNA(Pyl). Pyrrolysine is a lysine derivative encoded by the termination codon UAG. In Methanosarcina mazei (strain ATCC BAA-159 / DSM 3647 / Goe1 / Go1 / JCM 11833 / OCM 88) (Methanosarcina frisia), this protein is Pyrrolysine--tRNA ligase.